Reading from the N-terminus, the 279-residue chain is Probable endonuclease 4 (279 aa).

Zn(2+) contacts are provided by His-66, His-106, Glu-142, Asp-175, His-178, His-212, Asp-225, His-227, and Glu-257.

The protein belongs to the AP endonuclease 2 family. It depends on Zn(2+) as a cofactor.

The enzyme catalyses Endonucleolytic cleavage to 5'-phosphooligonucleotide end-products.. In terms of biological role, endonuclease IV plays a role in DNA repair. It cleaves phosphodiester bonds at apurinic or apyrimidinic (AP) sites, generating a 3'-hydroxyl group and a 5'-terminal sugar phosphate. This chain is Probable endonuclease 4, found in Moorella thermoacetica (strain ATCC 39073 / JCM 9320).